A 170-amino-acid polypeptide reads, in one-letter code: RNA pyrophosphohydrolase (170 aa).

The region spanning 8-151 (PYRPNVGIAL…KKALYAELIP (144 aa)) is the Nudix hydrolase domain. The short motif at 42-63 (GGIDEGETPQVAALREMGEEIG) is the Nudix box element.

It belongs to the Nudix hydrolase family. RppH subfamily. The cofactor is a divalent metal cation.

In terms of biological role, accelerates the degradation of transcripts by removing pyrophosphate from the 5'-end of triphosphorylated RNA, leading to a more labile monophosphorylated state that can stimulate subsequent ribonuclease cleavage. The protein is RNA pyrophosphohydrolase of Gluconobacter oxydans (strain 621H) (Gluconobacter suboxydans).